Here is a 267-residue protein sequence, read N- to C-terminus: Hydroxyethylthiazole kinase (267 aa).

Methionine 46 is a binding site for substrate. 2 residues coordinate ATP: arginine 121 and threonine 167. Alanine 194 provides a ligand contact to substrate.

It belongs to the Thz kinase family. It depends on Mg(2+) as a cofactor.

It carries out the reaction 5-(2-hydroxyethyl)-4-methylthiazole + ATP = 4-methyl-5-(2-phosphooxyethyl)-thiazole + ADP + H(+). The protein operates within cofactor biosynthesis; thiamine diphosphate biosynthesis; 4-methyl-5-(2-phosphoethyl)-thiazole from 5-(2-hydroxyethyl)-4-methylthiazole: step 1/1. Its function is as follows. Catalyzes the phosphorylation of the hydroxyl group of 4-methyl-5-beta-hydroxyethylthiazole (THZ). The sequence is that of Hydroxyethylthiazole kinase from Rhizobium johnstonii (strain DSM 114642 / LMG 32736 / 3841) (Rhizobium leguminosarum bv. viciae).